Reading from the N-terminus, the 400-residue chain is DNA polymerase IV (400 aa).

Positions 5-187 constitute a UmuC domain; sequence IFLVDMNAFF…LPVEFMNGIG (183 aa). Mg(2+)-binding residues include aspartate 9 and aspartate 105. The active site involves glutamate 106.

Belongs to the DNA polymerase type-Y family. In terms of assembly, monomer. Requires Mg(2+) as cofactor.

The protein localises to the cytoplasm. The catalysed reaction is DNA(n) + a 2'-deoxyribonucleoside 5'-triphosphate = DNA(n+1) + diphosphate. Poorly processive, error-prone DNA polymerase involved in untargeted mutagenesis. Copies undamaged DNA at stalled replication forks, which arise in vivo from mismatched or misaligned primer ends. These misaligned primers can be extended by PolIV. Exhibits no 3'-5' exonuclease (proofreading) activity. May be involved in translesional synthesis, in conjunction with the beta clamp from PolIII. This Clostridium kluyveri (strain ATCC 8527 / DSM 555 / NBRC 12016 / NCIMB 10680 / K1) protein is DNA polymerase IV.